A 389-amino-acid polypeptide reads, in one-letter code: UDP-GlcNAc:betaGal beta-1,3-N-acetylglucosaminyltransferase 8 (389 aa).

Over 1–7 (MRCRKCQ) the chain is Cytoplasmic. Residues 8–24 (LCLSALLTLLGLKVYIE) traverse the membrane as a helical; Signal-anchor for type II membrane protein segment. The Lumenal segment spans residues 25–389 (WTSESWLKKA…RHLWVPELQC (365 aa)). The disordered stretch occupies residues 36 to 57 (PRGALPSPTPPNAEPTLPTNLS). 2 N-linked (GlcNAc...) asparagine glycosylation sites follow: Asn55 and Asn212.

Belongs to the glycosyltransferase 31 family. In terms of assembly, interacts with B3GNT2; this interaction greatly increases B3GNT2 catalytic activity, independently of B3GNT8 enzymatic activity.

It is found in the golgi apparatus membrane. The protein operates within protein modification; protein glycosylation. Its function is as follows. Beta-1,3-N-acetylglucosaminyltransferase that plays a role in the elongation of specific branch structures of multiantennary N-glycans. Has strong activity towards tetraantennary N-glycans and 2,6 triantennary glycans. This is UDP-GlcNAc:betaGal beta-1,3-N-acetylglucosaminyltransferase 8 from Mus musculus (Mouse).